Here is a 37-residue protein sequence, read N- to C-terminus: Mating pheromone Er-20 (37 aa).

Intrachain disulfides connect Cys-3/Cys-18, Cys-10/Cys-32, and Cys-15/Cys-24.

In terms of assembly, homodimer.

The protein resides in the secreted. In terms of biological role, mating ciliate pheromones (or gamones) are diffusible extracellular communication signals that distinguish different intraspecific classes of cells commonly referred to as 'mating types'. They prepare the latter for conjugation by changing their cell surface properties. The protein is Mating pheromone Er-20 (MAT20) of Euplotes raikovi.